The primary structure comprises 146 residues: 3-dehydroquinate dehydratase (146 aa).

The active-site Proton acceptor is Tyr-22. 3 residues coordinate substrate: Asn-73, His-79, and Asp-86. The Proton donor role is filled by His-99. Substrate-binding positions include 100 to 101 and Arg-110; that span reads LS.

This sequence belongs to the type-II 3-dehydroquinase family. As to quaternary structure, homododecamer.

It carries out the reaction 3-dehydroquinate = 3-dehydroshikimate + H2O. The protein operates within metabolic intermediate biosynthesis; chorismate biosynthesis; chorismate from D-erythrose 4-phosphate and phosphoenolpyruvate: step 3/7. Catalyzes a trans-dehydration via an enolate intermediate. The polypeptide is 3-dehydroquinate dehydratase (Synechococcus sp. (strain CC9605)).